The following is a 419-amino-acid chain: S-adenosylmethionine synthase (419 aa).

His14 is a binding site for ATP. Asp16 contributes to the Mg(2+) binding site. Glu42 is a K(+) binding site. 2 residues coordinate L-methionine: Glu55 and Gln98. Positions 98-108 are flexible loop; sequence QSADINQGVDR. ATP-binding positions include 164–166, 242–243, Asp251, 257–258, Ala274, and Lys278; these read DAK, KF, and RK. Position 251 (Asp251) interacts with L-methionine. Position 282 (Lys282) interacts with L-methionine.

Belongs to the AdoMet synthase family. As to quaternary structure, homotetramer; dimer of dimers. The cofactor is Mg(2+). K(+) serves as cofactor.

It localises to the cytoplasm. The catalysed reaction is L-methionine + ATP + H2O = S-adenosyl-L-methionine + phosphate + diphosphate. It functions in the pathway amino-acid biosynthesis; S-adenosyl-L-methionine biosynthesis; S-adenosyl-L-methionine from L-methionine: step 1/1. In terms of biological role, catalyzes the formation of S-adenosylmethionine (AdoMet) from methionine and ATP. The overall synthetic reaction is composed of two sequential steps, AdoMet formation and the subsequent tripolyphosphate hydrolysis which occurs prior to release of AdoMet from the enzyme. This is S-adenosylmethionine synthase from Cytophaga hutchinsonii (strain ATCC 33406 / DSM 1761 / CIP 103989 / NBRC 15051 / NCIMB 9469 / D465).